A 143-amino-acid polypeptide reads, in one-letter code: Large-conductance mechanosensitive channel (143 aa).

The next 2 helical transmembrane spans lie at 10 to 30 and 89 to 109; these read FAVK…GAFS and GSFI…FLMV.

The protein belongs to the MscL family. Homopentamer.

Its subcellular location is the cell inner membrane. Its function is as follows. Channel that opens in response to stretch forces in the membrane lipid bilayer. May participate in the regulation of osmotic pressure changes within the cell. In Burkholderia cenocepacia (strain HI2424), this protein is Large-conductance mechanosensitive channel.